The following is a 354-amino-acid chain: Uroporphyrinogen decarboxylase (354 aa).

Substrate contacts are provided by residues Arg-27–Arg-31, Phe-46, Asp-77, Tyr-154, Thr-209, and His-327.

This sequence belongs to the uroporphyrinogen decarboxylase family. In terms of assembly, homodimer.

It localises to the cytoplasm. The catalysed reaction is uroporphyrinogen III + 4 H(+) = coproporphyrinogen III + 4 CO2. Its pathway is porphyrin-containing compound metabolism; protoporphyrin-IX biosynthesis; coproporphyrinogen-III from 5-aminolevulinate: step 4/4. In terms of biological role, catalyzes the decarboxylation of four acetate groups of uroporphyrinogen-III to yield coproporphyrinogen-III. The polypeptide is Uroporphyrinogen decarboxylase (Salmonella typhi).